The sequence spans 177 residues: Large ribosomal subunit protein uL6 (177 aa).

Belongs to the universal ribosomal protein uL6 family. In terms of assembly, part of the 50S ribosomal subunit.

In terms of biological role, this protein binds to the 23S rRNA, and is important in its secondary structure. It is located near the subunit interface in the base of the L7/L12 stalk, and near the tRNA binding site of the peptidyltransferase center. The polypeptide is Large ribosomal subunit protein uL6 (Pectobacterium carotovorum subsp. carotovorum (strain PC1)).